Here is a 159-residue protein sequence, read N- to C-terminus: MPKFYCDYCDTYLTHDSPSVRKTHCSGRKHKENVKDYYQKWMEEQAQSLIDKTTAAFQQGKIPPTPFAAPPAGSAMIPPPPSMGGPPRPGMMPAPPMAGPPMMPMMGPPPPGMMPVGHGPGMRPPMGAHMPMMPGPPMMRPPTRPMMLQSRPGMARPDR.

A Matrin-type zinc finger spans residues 4-36 (FYCDYCDTYLTHDSPSVRKTHCSGRKHKENVKD). Disordered stretches follow at residues 63–95 (PPTP…MPAP) and 139–159 (MRPP…RPDR). The span at 77-95 (IPPPPSMGGPPRPGMMPAP) shows a compositional bias: pro residues.

This sequence belongs to the U1 small nuclear ribonucleoprotein C family. As to quaternary structure, component of the U1 snRNP. The U1 snRNP is composed of the U1 snRNA and the 7 core Sm proteins snrpb, snrpd1, snrpd2, snrpd3, snrpe, snrpf and snrpg that assemble in a heptameric protein ring on the Sm site of the small nuclear RNA to form the core snRNP, and at least 3 U1 snRNP-specific proteins snrnp70/U1-70K, snrpa/U1-A and snrpc/U1-C. snrpc/U1-C interacts with U1 snRNA and the 5' splice-site region of the pre-mRNA.

It is found in the nucleus. In terms of biological role, component of the spliceosomal U1 snRNP, which is essential for recognition of the pre-mRNA 5' splice-site and the subsequent assembly of the spliceosome. snrpc/U1-C is directly involved in initial 5' splice-site recognition for both constitutive and regulated alternative splicing. The interaction with the 5' splice-site seems to precede base-pairing between the pre-mRNA and the U1 snRNA. Stimulates commitment or early (E) complex formation by stabilizing the base pairing of the 5' end of the U1 snRNA and the 5' splice-site region. This Xenopus tropicalis (Western clawed frog) protein is U1 small nuclear ribonucleoprotein C.